Here is a 602-residue protein sequence, read N- to C-terminus: Prostaglandin G/H synthase 1 (602 aa).

An N-terminal signal peptide occupies residues 1 to 26 (MSRRSLSLWFPLLLLLLLPPTPSVLL). The EGF-like domain occupies 34–72 (PVNPCCYYPCQNQGVCVRFGLDNYQCDCTRTGYSGPNCT). Cystine bridges form between Cys-38–Cys-49, Cys-39–Cys-161, Cys-43–Cys-59, and Cys-61–Cys-71. Residues Asn-70, Asn-106, and Asn-146 are each glycosylated (N-linked (GlcNAc...) asparagine). The active-site Proton acceptor is His-209. Tyr-387 serves as the catalytic For cyclooxygenase activity. His-390 is a binding site for heme b. Residues Cys-571 and Cys-577 are joined by a disulfide bond.

The protein belongs to the prostaglandin G/H synthase family. As to quaternary structure, homodimer. It depends on heme b as a cofactor.

Its subcellular location is the microsome membrane. It localises to the endoplasmic reticulum membrane. The enzyme catalyses (5Z,8Z,11Z,14Z)-eicosatetraenoate + AH2 + 2 O2 = prostaglandin H2 + A + H2O. It carries out the reaction (5Z,8Z,11Z,14Z)-eicosatetraenoate + 2 O2 = prostaglandin G2. The catalysed reaction is prostaglandin G2 + AH2 = prostaglandin H2 + A + H2O. It catalyses the reaction (9Z,12Z)-octadecadienoate + AH2 + O2 = (9R)-hydroxy-(10E,12Z)-octadecadienoate + A + H2O. The enzyme catalyses (9Z,12Z)-octadecadienoate + AH2 + O2 = (9S)-hydroxy-(10E,12Z)-octadecadienoate + A + H2O. It carries out the reaction (9Z,12Z)-octadecadienoate + AH2 + O2 = (13S)-hydroxy-(9Z,11E)-octadecadienoate + A + H2O. The catalysed reaction is (9Z,12Z)-octadecadienoate + AH2 + O2 = (13R)-hydroxy-(9Z,11E)-octadecadienoate + A + H2O. It participates in lipid metabolism; prostaglandin biosynthesis. With respect to regulation, the cyclooxygenase activity is inhibited by nonsteroidal anti-inflammatory drugs (NSAIDs) including ibuprofen, flurbiprofen, ketoprofen, naproxen, flurbiprofen, anirolac, fenclofenac and diclofenac. Its function is as follows. Dual cyclooxygenase and peroxidase that plays an important role in the biosynthesis pathway of prostanoids, a class of C20 oxylipins mainly derived from arachidonate ((5Z,8Z,11Z,14Z)-eicosatetraenoate, AA, C20:4(n-6)), with a particular role in the inflammatory response. The cyclooxygenase activity oxygenates AA to the hydroperoxy endoperoxide prostaglandin G2 (PGG2), and the peroxidase activity reduces PGG2 to the hydroxy endoperoxide prostaglandin H2 (PGH2), the precursor of all 2-series prostaglandins and thromboxanes. This complex transformation is initiated by abstraction of hydrogen at carbon 13 (with S-stereochemistry), followed by insertion of molecular O2 to form the endoperoxide bridge between carbon 9 and 11 that defines prostaglandins. The insertion of a second molecule of O2 (bis-oxygenase activity) yields a hydroperoxy group in PGG2 that is then reduced to PGH2 by two electrons. Involved in the constitutive production of prostanoids in particular in the stomach and platelets. In gastric epithelial cells, it is a key step in the generation of prostaglandins, such as prostaglandin E2 (PGE2), which plays an important role in cytoprotection. In platelets, it is involved in the generation of thromboxane A2 (TXA2), which promotes platelet activation and aggregation, vasoconstriction and proliferation of vascular smooth muscle cells. Can also use linoleate (LA, (9Z,12Z)-octadecadienoate, C18:2(n-6)) as substrate and produce hydroxyoctadecadienoates (HODEs) in a regio- and stereospecific manner, being (9R)-HODE ((9R)-hydroxy-(10E,12Z)-octadecadienoate) and (13S)-HODE ((13S)-hydroxy-(9Z,11E)-octadecadienoate) its major products. The polypeptide is Prostaglandin G/H synthase 1 (Mus musculus (Mouse)).